The primary structure comprises 860 residues: Alanine--tRNA ligase (860 aa).

Residues H553, H557, C655, and H659 each contribute to the Zn(2+) site.

Belongs to the class-II aminoacyl-tRNA synthetase family. The cofactor is Zn(2+).

It is found in the cytoplasm. It carries out the reaction tRNA(Ala) + L-alanine + ATP = L-alanyl-tRNA(Ala) + AMP + diphosphate. Functionally, catalyzes the attachment of alanine to tRNA(Ala) in a two-step reaction: alanine is first activated by ATP to form Ala-AMP and then transferred to the acceptor end of tRNA(Ala). Also edits incorrectly charged Ser-tRNA(Ala) and Gly-tRNA(Ala) via its editing domain. This is Alanine--tRNA ligase from Legionella pneumophila (strain Corby).